A 448-amino-acid chain; its full sequence is Asparagine--tRNA ligase (448 aa).

This sequence belongs to the class-II aminoacyl-tRNA synthetase family. Homodimer.

The protein localises to the cytoplasm. The enzyme catalyses tRNA(Asn) + L-asparagine + ATP = L-asparaginyl-tRNA(Asn) + AMP + diphosphate + H(+). In Streptococcus pyogenes serotype M4 (strain MGAS10750), this protein is Asparagine--tRNA ligase.